We begin with the raw amino-acid sequence, 343 residues long: Ketol-acid reductoisomerase (NADP(+)) (343 aa).

In terms of domain architecture, KARI N-terminal Rossmann spans 7-186; the sequence is TTVYYDEDAD…GCTRAGVIET (180 aa). NADP(+)-binding positions include 30–33, Arg-53, Ser-56, Ser-58, and 88–91; these read YGSQ and DTIQ. His-112 is a catalytic residue. Gly-138 lines the NADP(+) pocket. In terms of domain architecture, KARI C-terminal knotted spans 187–329; that stretch reads SFQEEVETDL…ENLRELFAWG (143 aa). 4 residues coordinate Mg(2+): Asp-195, Glu-199, Glu-231, and Glu-235. Ser-256 is a binding site for substrate.

The protein belongs to the ketol-acid reductoisomerase family. Mg(2+) is required as a cofactor.

The enzyme catalyses (2R)-2,3-dihydroxy-3-methylbutanoate + NADP(+) = (2S)-2-acetolactate + NADPH + H(+). It carries out the reaction (2R,3R)-2,3-dihydroxy-3-methylpentanoate + NADP(+) = (S)-2-ethyl-2-hydroxy-3-oxobutanoate + NADPH + H(+). Its pathway is amino-acid biosynthesis; L-isoleucine biosynthesis; L-isoleucine from 2-oxobutanoate: step 2/4. The protein operates within amino-acid biosynthesis; L-valine biosynthesis; L-valine from pyruvate: step 2/4. Its function is as follows. Involved in the biosynthesis of branched-chain amino acids (BCAA). Catalyzes an alkyl-migration followed by a ketol-acid reduction of (S)-2-acetolactate (S2AL) to yield (R)-2,3-dihydroxy-isovalerate. In the isomerase reaction, S2AL is rearranged via a Mg-dependent methyl migration to produce 3-hydroxy-3-methyl-2-ketobutyrate (HMKB). In the reductase reaction, this 2-ketoacid undergoes a metal-dependent reduction by NADPH to yield (R)-2,3-dihydroxy-isovalerate. This Haloarcula marismortui (strain ATCC 43049 / DSM 3752 / JCM 8966 / VKM B-1809) (Halobacterium marismortui) protein is Ketol-acid reductoisomerase (NADP(+)).